Consider the following 58-residue polypeptide: Ferredoxin-2 (58 aa).

4Fe-4S ferredoxin-type domains lie at 2–27 (IEVN…MNEE) and 30–58 (KAVV…IVRS). A [3Fe-4S] cluster-binding site is contributed by Cys-8. Cys-11 carries the post-translational modification Cysteine methyl disulfide. Cys-14 is a [3Fe-4S] cluster binding site. Cys-18 and Cys-42 are oxidised to a cystine. Cys-50 lines the [3Fe-4S] cluster pocket.

In terms of assembly, homodimer (ferredoxin I) or homotetramer (ferredoxin II). [3Fe-4S] cluster serves as cofactor. Requires [4Fe-4S] cluster as cofactor.

In terms of biological role, ferredoxins are iron-sulfur proteins that transfer electrons in a wide variety of metabolic reactions. The polypeptide is Ferredoxin-2 (Megalodesulfovibrio gigas (Desulfovibrio gigas)).